The primary structure comprises 330 residues: uncharacterized protein (330 aa).

Belongs to the ornithine cyclodeaminase/mu-crystallin family.

It localises to the cytoplasm. This is an uncharacterized protein from Schizosaccharomyces pombe (strain 972 / ATCC 24843) (Fission yeast).